We begin with the raw amino-acid sequence, 154 residues long: Small ribosomal subunit protein uS13 (154 aa).

This sequence belongs to the universal ribosomal protein uS13 family.

The protein localises to the cytoplasm. In terms of biological role, located at the top of the head of the 40S subunit, it contacts several helices of the 18S rRNA. The sequence is that of Small ribosomal subunit protein uS13 (rps18) from Dictyostelium discoideum (Social amoeba).